The following is a 273-amino-acid chain: Diadenylate cyclase (273 aa).

3 consecutive transmembrane segments (helical) span residues 12–32 (LANI…IMLI), 37–57 (AVQL…SGFF), and 61–81 (TVEW…IIIF). A DAC domain is found at 82–242 (QPELRRALET…GGELFRDVSE (161 aa)).

The protein belongs to the adenylate cyclase family. DacA/CdaA subfamily. As to quaternary structure, probably a homodimer.

The protein resides in the cell membrane. It carries out the reaction 2 ATP = 3',3'-c-di-AMP + 2 diphosphate. Its function is as follows. Catalyzes the condensation of 2 ATP molecules into cyclic di-AMP (c-di-AMP), a signaling compound secreted into the host's cytosol where it triggers the cytosolic surveillance pathway (CSP), a host pathway of innate immunity characterized by expression of beta interferon (IFN-beta) and coregulated genes. Overexpression increases export of c-di-AMP. c-di-AMP is a second messenger that mediates growth, cell wall stability and virulence. The protein is Diadenylate cyclase of Listeria monocytogenes serotype 1/2a (strain 10403S).